The chain runs to 96 residues: Co-chaperonin GroES (96 aa).

It belongs to the GroES chaperonin family. As to quaternary structure, heptamer of 7 subunits arranged in a ring. Interacts with the chaperonin GroEL.

The protein resides in the cytoplasm. Its function is as follows. Together with the chaperonin GroEL, plays an essential role in assisting protein folding. The GroEL-GroES system forms a nano-cage that allows encapsulation of the non-native substrate proteins and provides a physical environment optimized to promote and accelerate protein folding. GroES binds to the apical surface of the GroEL ring, thereby capping the opening of the GroEL channel. The polypeptide is Co-chaperonin GroES (Neisseria meningitidis serogroup B (strain ATCC BAA-335 / MC58)).